Consider the following 54-residue polypeptide: Large ribosomal subunit protein bL33 (54 aa).

This sequence belongs to the bacterial ribosomal protein bL33 family.

The chain is Large ribosomal subunit protein bL33 from Legionella pneumophila (strain Lens).